A 117-amino-acid chain; its full sequence is Large ribosomal subunit protein bL20 (117 aa).

It belongs to the bacterial ribosomal protein bL20 family.

Functionally, binds directly to 23S ribosomal RNA and is necessary for the in vitro assembly process of the 50S ribosomal subunit. It is not involved in the protein synthesizing functions of that subunit. The sequence is that of Large ribosomal subunit protein bL20 from Pasteurella multocida (strain Pm70).